Reading from the N-terminus, the 280-residue chain is Diaminopimelate epimerase (280 aa).

Substrate-binding residues include Asn13 and Asn66. Catalysis depends on Cys75, which acts as the Proton donor. Substrate-binding positions include 76 to 77, Asn165, Asn198, and 216 to 217; these read GN and ER. Cys225 functions as the Proton acceptor in the catalytic mechanism. 226–227 contributes to the substrate binding site; sequence GT.

The protein belongs to the diaminopimelate epimerase family. Homodimer.

The protein resides in the cytoplasm. It catalyses the reaction (2S,6S)-2,6-diaminopimelate = meso-2,6-diaminopimelate. It functions in the pathway amino-acid biosynthesis; L-lysine biosynthesis via DAP pathway; DL-2,6-diaminopimelate from LL-2,6-diaminopimelate: step 1/1. Its function is as follows. Catalyzes the stereoinversion of LL-2,6-diaminopimelate (L,L-DAP) to meso-diaminopimelate (meso-DAP), a precursor of L-lysine and an essential component of the bacterial peptidoglycan. This Cyanothece sp. (strain PCC 7425 / ATCC 29141) protein is Diaminopimelate epimerase.